A 244-amino-acid chain; its full sequence is Acetoacetate decarboxylase (244 aa).

Lys-115 serves as the catalytic Schiff-base intermediate with acetoacetate.

Belongs to the ADC family.

The enzyme catalyses acetoacetate + H(+) = acetone + CO2. Catalyzes the conversion of acetoacetate to acetone and carbon dioxide. The sequence is that of Acetoacetate decarboxylase from Streptomyces nogalater.